The sequence spans 143 residues: Putative pre-16S rRNA nuclease (143 aa).

The protein belongs to the YqgF nuclease family.

It is found in the cytoplasm. Its function is as follows. Could be a nuclease involved in processing of the 5'-end of pre-16S rRNA. This chain is Putative pre-16S rRNA nuclease, found in Lactobacillus johnsonii (strain CNCM I-12250 / La1 / NCC 533).